The sequence spans 397 residues: tRNA-specific 2-thiouridylase MnmA (397 aa).

Residues 6 to 13 (AMSGGVDS) and L32 each bind ATP. C101 functions as the Nucleophile in the catalytic mechanism. A disulfide bond links C101 and C199. G125 lines the ATP pocket. The interaction with tRNA stretch occupies residues 148 to 150 (KDQ). The active-site Cysteine persulfide intermediate is C199.

It belongs to the MnmA/TRMU family.

The protein resides in the cytoplasm. It carries out the reaction S-sulfanyl-L-cysteinyl-[protein] + uridine(34) in tRNA + AH2 + ATP = 2-thiouridine(34) in tRNA + L-cysteinyl-[protein] + A + AMP + diphosphate + H(+). Its function is as follows. Catalyzes the 2-thiolation of uridine at the wobble position (U34) of tRNA, leading to the formation of s(2)U34. The chain is tRNA-specific 2-thiouridylase MnmA from Clavibacter sepedonicus (Clavibacter michiganensis subsp. sepedonicus).